The primary structure comprises 85 residues: uncharacterized protein (85 aa).

This sequence belongs to the ycf76 family.

It is found in the plastid. The protein resides in the chloroplast. This is an uncharacterized protein from Oryza sativa subsp. japonica (Rice).